A 575-amino-acid chain; its full sequence is Alpha-(1,6)-fucosyltransferase (575 aa).

The Cytoplasmic portion of the chain corresponds to 1–9 (MRAWTGSWR). The helical; Signal-anchor for type II membrane protein transmembrane segment at 10-30 (WIMLILFAWGTLLFYIGGHLV) threads the bilayer. At 31 to 575 (RDNDHPDHSS…KYPTYPEAEK (545 aa)) the chain is on the lumenal side. 3 cysteine pairs are disulfide-bonded: C204/C266, C212/C230, and C218/C222. The GT23 domain maps to 206–493 (KARKLVCNIN…PDASANFHSL (288 aa)). At S278 the chain carries Phosphoserine. The short motif at 299–305 (PRPPYLP) is the SH3-binding element. The interval 365-366 (RR) is important for donor substrate binding. C465 and C472 are oxidised to a cystine. An SH3 domain is found at 502 to 563 (QNAHNQIAVY…PSYKVREKIE (62 aa)).

Belongs to the glycosyltransferase 23 family. Post-translationally, tyrosine phosphorylated by PKDCC/VLK.

Its subcellular location is the golgi apparatus. It localises to the golgi stack membrane. It catalyses the reaction N(4)-{beta-D-GlcNAc-(1-&gt;2)-alpha-D-Man-(1-&gt;3)-[beta-D-GlcNAc-(1-&gt;2)-alpha-D-Man-(1-&gt;6)]-beta-D-Man-(1-&gt;4)-beta-D-GlcNAc-(1-&gt;4)-beta-D-GlcNAc}-L-asparaginyl-[protein] + GDP-beta-L-fucose = an N(4)-{beta-D-GlcNAc-(1-&gt;2)-alpha-D-Man-(1-&gt;3)-[beta-D-GlcNAc-(1-&gt;2)-alpha-D-Man-(1-&gt;6)]-beta-D-Man-(1-&gt;4)-beta-D-GlcNAc-(1-&gt;4)-[alpha-L-Fuc-(1-&gt;6)]-beta-D-GlcNAc}-L-asparaginyl-[protein] + GDP + H(+). Its pathway is protein modification; protein glycosylation. Catalyzes the addition of fucose in alpha 1-6 linkage to the first GlcNAc residue, next to the peptide chains in N-glycans. This chain is Alpha-(1,6)-fucosyltransferase (Fut8), found in Mus musculus (Mouse).